A 584-amino-acid chain; its full sequence is MSVAITSNNNKQPQPQPQPHLKVVNNNSTFNLYTWLRSVFQYCISLIISYTSNWLLVNNDNNNNNININYKSNNNDNNNASTSLQPKISNVKAESMKIFPDLQKSNFTTYYTTEKPLHQDVLKPVICSTGITSRILPYTNEKGELEWKFTEVQGKELDEFKMHPQQQQQQQEVKQELSPAESNESNESLAKDSSTTPASISDSPSHSETESTVSSTIIANSNQIFKCPSCDAEFRVRGYLTRHMKKHSTKKAYTCPFHDKSIYVDENNITHKCHSSGGFSRRDTYKTHLKSRHFNYAKPIKSAERSKVPGQCAMCGEHFNSAEIWCEIHVEGGECKFLPMGFKGKSRIKNRLKKQIQKNKMIDPELVPFASKVLEEVEQERQKKKNYRTTGTGSESSIQSQESESSINSTPLSMQISAPVPMPVSIQQQHQHQHQHHHHVQNQHQQHVNQQQSIATPASIYSSSASSTSSYESTHSPYTPQSSRSPLSHMYNPQQPPYFNQIAQAHQQDGQKNQVKDDYDDEYCLDVDQLNTTFVNETVANYLQIHDFHSMNQYQPGQQQQQQQQQQQQQQQRQHQQQQPSMYF.

2 stretches are compositionally biased toward polar residues: residues Met1–Lys11 and Ala180–Asp202. Disordered stretches follow at residues Met1–Lys22 and Lys161–Ser214. Positions Ser203–Ser214 are enriched in low complexity. The segment at Phe225–His247 adopts a C2H2-type zinc-finger fold. 2 disordered regions span residues Arg381–Pro496 and Gln553–Phe584. Low complexity predominate over residues Ser394–Ile407. Positions Gln431–Gln441 are enriched in basic residues. Low complexity predominate over residues Asn442–Pro480. The span at Gln481–Pro496 shows a compositional bias: polar residues.

Post-translationally, proteolytically cleaved: activated by the amino acid-induced proteolytic removal of an N-terminal inhibitory domain.

It localises to the cell membrane. The protein localises to the nucleus. Functionally, transcription factor involved in the regulation of gene expression in response to extracellular amino acid levels. Synthesized as latent cytoplasmic precursor, which, upon a signal initiated by the plasma membrane SPS amino acid sensor system (including CSY1 and CSH3), becomes proteolytically activated and relocates to the nucleus, where it induces the expression of SPS-sensor-regulated genes. Required for efficient alkalinization through the release of ammonia from the cells produced during the breakdown of amino acids, and subsequent switch to the hyphal form. The protein is Transcriptional regulator STP2 (STP2) of Candida albicans (strain SC5314 / ATCC MYA-2876) (Yeast).